Consider the following 214-residue polypeptide: Ribosomal RNA small subunit methyltransferase G (214 aa).

S-adenosyl-L-methionine contacts are provided by residues Gly77, Leu82, 128 to 129, and Arg143; that span reads VE.

Belongs to the methyltransferase superfamily. RNA methyltransferase RsmG family.

It is found in the cytoplasm. It catalyses the reaction guanosine(527) in 16S rRNA + S-adenosyl-L-methionine = N(7)-methylguanosine(527) in 16S rRNA + S-adenosyl-L-homocysteine. In terms of biological role, specifically methylates the N7 position of guanine in position 527 of 16S rRNA. This is Ribosomal RNA small subunit methyltransferase G from Nitrosomonas eutropha (strain DSM 101675 / C91 / Nm57).